We begin with the raw amino-acid sequence, 72 residues long: Cell division protein ZapB (72 aa).

A coiled-coil region spans residues 1–72 (MSLEILDQLE…RSLLGKIDNV (72 aa)). Residues 33-57 (KNNQSQQANDALRSENEQLKSEHQN) form a disordered region. Basic and acidic residues predominate over residues 44–57 (LRSENEQLKSEHQN).

It belongs to the ZapB family. As to quaternary structure, homodimer. The ends of the coiled-coil dimer bind to each other, forming polymers. Interacts with FtsZ.

The protein localises to the cytoplasm. Non-essential, abundant cell division factor that is required for proper Z-ring formation. It is recruited early to the divisome by direct interaction with FtsZ, stimulating Z-ring assembly and thereby promoting cell division earlier in the cell cycle. Its recruitment to the Z-ring requires functional FtsA or ZipA. This is Cell division protein ZapB from Pasteurella multocida (strain Pm70).